We begin with the raw amino-acid sequence, 33 residues long: Neurotoxin Nk-3FTx (33 aa).

2 cysteine pairs are disulfide-bonded: Cys-3-Cys-24 and Cys-6-Cys-11.

Expressed by the venom gland.

The protein resides in the secreted. Possible voltage-gated potassium channel (Kv) blocker. Decreases amplitude of compound action potential and conduction velocity in toad sciatic nerve. Has only mild anticoagulant activity even at a concentration of 5ug/ml. Shows no cytotoxicity towards human cell lines. The sequence is that of Neurotoxin Nk-3FTx from Naja kaouthia (Monocled cobra).